The sequence spans 816 residues: Phosphatidylinositol 4-kinase beta (816 aa).

3 disordered regions span residues 1–30 (MGDM…GSLL), 101–120 (EDEM…RRRR), and 250–318 (RKRE…SFSS). An N-acetylglycine modification is found at Gly-2. Residues 2–68 (GDMVVEPATL…VKLLHGGVAI (67 aa)) are interaction with ACBD3. Residues 10–30 (TLKPTSEPTPSPSGNNGGSLL) show a composition bias toward low complexity. The PIK helical domain occupies 52-242 (CQEVLEKVKL…GTKLRKLILS (191 aa)). The residue at position 258 (Ser-258) is a Phosphoserine. Thr-263 is subject to Phosphothreonine. Ser-266, Ser-275, Ser-277, Ser-284, and Ser-294 each carry phosphoserine. Polar residues-rich tracts occupy residues 278–297 (DATA…SNPK) and 306–318 (SSST…SFSS). A Phosphoserine modification is found at Ser-428. Thr-438 is modified (phosphothreonine). Ser-511 is subject to Phosphoserine. Thr-517 and Thr-519 each carry phosphothreonine. In terms of domain architecture, PI3K/PI4K catalytic spans 535-801 (EPWQEKVRRI…MVDGSMRSIT (267 aa)). The G-loop stretch occupies residues 541 to 547 (VRRIREG). The interval 668 to 676 (QVKDRHNGN) is catalytic loop. The interval 687–711 (HIDFGFILSSSPRNLGFETSAFKLT) is activation loop.

Belongs to the PI3/PI4-kinase family. Type III PI4K subfamily. Interacts with ARF1 and ARF3 in the Golgi complex, but not with ARF4, ARF5 or ARF6. Interacts with NCS1/FREQ in a calcium-independent manner. Interacts with CALN1/CABP8 and CALN2/CABP7; in a calcium-dependent manner; this interaction competes with NCS1/FREQ binding. Interacts with ACBD3. Interacts with ARMH3, YWHAB, YWHAE, YWHAG, YWHAH, YWHAQ, YWHAZ and SFN. Interacts with GGA2 (via VHS domain); the interaction is important for PI4KB location at the Golgi apparatus membrane. Interacts with ATG9A. It depends on Mg(2+) as a cofactor. Requires Mn(2+) as cofactor.

Its subcellular location is the endomembrane system. The protein resides in the mitochondrion outer membrane. It is found in the rough endoplasmic reticulum membrane. It localises to the golgi apparatus. The protein localises to the golgi apparatus membrane. The catalysed reaction is a 1,2-diacyl-sn-glycero-3-phospho-(1D-myo-inositol) + ATP = a 1,2-diacyl-sn-glycero-3-phospho-(1D-myo-inositol 4-phosphate) + ADP + H(+). Its activity is regulated as follows. Inhibited by wortmannin. Increased kinase activity upon interaction with NCS1/FREQ. In terms of biological role, phosphorylates phosphatidylinositol (PI) in the first committed step in the production of the second messenger inositol-1,4,5,-trisphosphate (PIP). May regulate Golgi disintegration/reorganization during mitosis, possibly via its phosphorylation. Involved in Golgi-to-plasma membrane trafficking. May play an important role in the inner ear development. The chain is Phosphatidylinositol 4-kinase beta (Pi4kb) from Mus musculus (Mouse).